Here is an 870-residue protein sequence, read N- to C-terminus: MFFACYCALRTNVKKYRYQDEDAPHDHSLPRLTHEVRGPELVHVSEKNLSQIENVHGYVLQSHISPLKASPAPIIVNTDTLDTIPYVNGTEIEYEFEEITLERGNSGLGFSIAGGTDNPHIGDDPGIFITKIIPGGAAAEDGRLRVNDCILRVNEVDVSEVSHSKAVEALKEAGSIVRLYVRRRRPILETVVEIKLFKGPKGLGFSIAGGVGNQHIPGDNSIYVTKIIDGGAAQKDGRLQVGDRLLMVNNYSLEEVTHEEAVAILKNTSEVVYLKVGKPTTIYMTDPYGPPDITHSYSPPMENHLLSGNNGTLEYKTSLPPISPGRYSPIPKHMLVDDDYTRPPEPVYSTVNKLCDKPASPRHYSPVECDKSFLLSAPYSHYHLGLLPDSEMTSHSQHSTATRQPSMTLQRAVSLEGEPRKVVLHKGSTGLGFNIVGGEDGEGIFVSFILAGGPADLSGELQRGDQILSVNGIDLRGASHEQAAAALKGAGQTVTIIAQYQPEDYARFEAKIHDLREQMMNHSMSSGSGSLRTNQKRSLYVRAMFDYDKSKDSGLPSQGLSFKYGDILHVINASDDEWWQARRVMLEGDSEEMGVIPSKRRVERKERARLKTVKFNAKPGVIDSKGSFNDKRKKSFIFSRKFPFYKNKEQSEQETSDPERGQEDLILSYEPVTRQEINYTRPVIILGPMKDRINDDLISEFPDKFGSCVPHTTRPKRDYEVDGRDYHFVISREQMEKDIQEHKFIEAGQYNDNLYGTSVQSVRFVAERGKHCILDVSGNAIKRLQVAQLYPIAIFIKPRSLEPLMEMNKRLTEEQAKKTYDRAIKLEQEFGEYFTAIVQGDTLEDIYNQCKLVIEEQSGPFIWIPSKEKL.

Residues cysteine 5 and cysteine 7 are each lipidated (S-palmitoyl cysteine). Serine 28 bears the Phosphoserine mark. At tyrosine 58 the chain carries Phosphotyrosine. Residue serine 65 is modified to Phosphoserine. 2 PDZ domains span residues 98 to 184 and 193 to 279; these read EITL…VRRR and EIKL…VGKP. Serine 307, serine 328, serine 360, serine 365, serine 406, and serine 414 each carry phosphoserine. A PDZ 3 domain is found at 421 to 501; the sequence is KVVLHKGSTG…QTVTIIAQYQ (81 aa). Phosphotyrosine is present on tyrosine 505. 5 positions are modified to phosphoserine: serine 528, serine 530, serine 553, serine 627, and serine 635. Positions 536 to 606 constitute an SH3 domain; the sequence is KRSLYVRAMF…PSKRRVERKE (71 aa). The Guanylate kinase-like domain maps to 680–855; it reads TRPVIILGPM…IYNQCKLVIE (176 aa). Residues tyrosine 750 and tyrosine 755 each carry the phosphotyrosine modification.

It belongs to the MAGUK family. Interacts through its PDZ domains with NETO1. Interacts with NOS1/nNOS through second PDZ domain. Interacts with KCNJ2/Kir2.1 (via C-terminus) through one of its PDZ domains. Interacts with KCNJ4, Interacts with FRMPD4 (via C-terminus). Interacts with LRFN1, LRFN2 and LRFN4. Interacts with FASLG. Interacts with KCNJ4. Interacts with ADAM22. Interacts with DGKI (via PDZ-binding motif). Post-translationally, palmitoylation of isoform 1 is not required for targeting to postsynaptic density.

The protein localises to the cell membrane. It is found in the postsynaptic density. It localises to the synapse. Its subcellular location is the membrane. The protein resides in the cell projection. The protein localises to the axon. It is found in the perikaryon. In terms of biological role, required for perception of chronic pain through NMDA receptor signaling. Regulates surface expression of NMDA receptors in dorsal horn neurons of the spinal cord. Interacts with the cytoplasmic tail of NMDA receptor subunits as well as inward rectifying potassium channels. Involved in regulation of synaptic stability at cholinergic synapses. Part of the postsynaptic protein scaffold of excitatory synapses. The polypeptide is Disks large homolog 2 (DLG2) (Homo sapiens (Human)).